Here is a 640-residue protein sequence, read N- to C-terminus: Protection of telomeres protein 1 (640 aa).

This sequence belongs to the telombin family. As to quaternary structure, homodimer or homooligomer. Component of the shelterin complex (telosome) composed of TERF1, TERF2, TINF2, TERF2IP, ACD and POT1. Binds single-stranded telomeric DNA as a monomer. Associated component of the telomerase holoenzyme complex. Found in a complex with TERF1, TINF2 and TNKS1. Interacts with TNKS1. Forms heterodimers with ACD. Identified in a complex with ACD and single-stranded telomeric DNA.

It is found in the nucleus. It localises to the chromosome. The protein localises to the telomere. Its function is as follows. Component of the telomerase ribonucleoprotein (RNP) complex that is essential for the replication of chromosome termini. Is a component of the double-stranded telomeric DNA-binding TRF1 complex which is involved in the regulation of telomere length by cis-inhibition of telomerase. Also acts as a single-stranded telomeric DNA-binding protein and thus may act as a downstream effector of the TRF1 complex and may transduce information about telomere maintenance and/or length to the telomere terminus. Component of the shelterin complex (telosome) that is involved in the regulation of telomere length and protection. Shelterin associates with arrays of double-stranded TTAGGG repeats added by telomerase and protects chromosome ends; without its protective activity, telomeres are no longer hidden from the DNA damage surveillance and chromosome ends are inappropriately processed by DNA repair pathways. Binds to two or more telomeric single-stranded 5'-TTAGGG-3' repeats (G-strand) and with high specificity to a minimal telomeric single-stranded 5'-TAGGGTTAG-3' sequence. Binds telomeric single-stranded sequences internally or at proximity of a 3'-end. Its activity is TERT dependent but it does not increase TERT activity. The protein is Protection of telomeres protein 1 (Pot1) of Mus musculus (Mouse).